The chain runs to 1775 residues: Atrochrysone carboxylic acid synthase (1775 aa).

Positions 35-262 (LRRLQALSKD…YAKWASLPIF (228 aa)) constitute a Starter acyltransferase (SAT) domain. The 434-residue stretch at 400–833 (DSKIAIVGMS…GGNTTMLLEE (434 aa)) folds into the Ketosynthase family 3 (KS3) domain. Catalysis depends on for beta-ketoacyl synthase activity residues C573, H708, and H750. Positions 934-1244 (FAFTGQGAFY…ENNWNTLADS (311 aa)) constitute a Malonyl-CoA:ACP transacylase (MAT) domain. The segment at 1313–1631 (TSSIHQVLQE…RSLLPTFFSP (319 aa)) is product template (PT) domain. The segment at 1317–1451 (HQVLQEDVTG…SAVVEYGDAN (135 aa)) is N-terminal hotdog fold. Positions 1317–1626 (HQVLQEDVTG…FRRFPRSLLP (310 aa)) constitute a PKS/mFAS DH domain. Catalysis depends on H1349, which acts as the Proton acceptor; for dehydratase activity. Positions 1480–1626 (AAVLPRNMAY…FRRFPRSLLP (147 aa)) are C-terminal hotdog fold. The Proton donor; for dehydratase activity role is filled by D1537. The segment at 1671–1697 (TAAPVPAPAPVPAKRAEPAPAAAQAAA) is disordered. Over residues 1688-1697 (PAPAAAQAAA) the composition is skewed to low complexity. Residues 1697 to 1774 (ATQNPTITGA…ELKTYIEETF (78 aa)) form the Carrier domain. Residue S1734 is modified to O-(pantetheine 4'-phosphoryl)serine.

It carries out the reaction holo-[ACP] + 8 malonyl-CoA + 8 H(+) = atrochrysone carboxyl-[ACP] + 8 CO2 + 8 CoA + 2 H2O. It functions in the pathway secondary metabolite biosynthesis. Non-reducing polyketide synthase; part of the gene cluster that mediates the biosynthesis of physcion, a natural anthraquinone fungicide that can prevent plant fungal infections. The pathway begins with the polyketide synthase AcPKS that condenses 8 malonyl-CoA units to synthesize atrochrysone thioester which is released from the synthase by the atrochrysone carboxyl ACP thioesterase AcTE that breaks the thioester bond and leads to free atrochrysone carboxylic acid. Spontaneous decarboxylation of atrochrysone carboxylic acid leads to the formation of atrochrysone. Then, atrochrysone undergoes spontaneous dehydration and oxidation, giving the products emodin anthrone and emodin. The O-methyltransferase AcOMT then methylates the C-6 hydroxyl of emodin to form physcion. The polypeptide is Atrochrysone carboxylic acid synthase (Aspergillus chevalieri (Eurotium chevalieri)).